Reading from the N-terminus, the 402-residue chain is Multidrug resistance protein MdtH (402 aa).

Residues 1–12 (MSRVSQARNLGK) are Cytoplasmic-facing. A helical transmembrane segment spans residues 13-33 (YFLLIDNMLVVLGFFVVFPLI). The Periplasmic segment spans residues 34–98 (SIRFVDQMGW…GFATMGIAHE (65 aa)). Residues 99–116 (PWLLWFSCLLSGLGGTLF) form a helical membrane-spanning segment. Over 117-138 (DPPRSALVVKLIRPQQRGRFFS) the chain is Cytoplasmic. Residues 139-159 (LLMMQDSAGAVIGALLGSWLL) form a helical membrane-spanning segment. Residues 160–164 (QYDFR) lie on the Periplasmic side of the membrane. The chain crosses the membrane as a helical span at residues 165-185 (LVCATGAVLFVLCAAFNAWLL). Residues 186 to 213 (PAWKLSTVRTPVREGMTRVMRDKRFVTY) are Cytoplasmic-facing. The helical transmembrane segment at 214–234 (VLTLAGYYMLAVQVMLMLPIM) threads the bilayer. Residues 235–243 (VNDVAGAPS) are Periplasmic-facing. The helical transmembrane segment at 244–264 (AVKWMYAIEACLSLTLLYPIA) threads the bilayer. Residues 265–276 (RWSEKHFRLEHR) are Cytoplasmic-facing. A helical transmembrane segment spans residues 277 to 297 (LMAGLLIMSLSMMPVGMVSGL). The Periplasmic portion of the chain corresponds to 298-299 (QQ). A helical membrane pass occupies residues 300–320 (LFNLICLFYIGSIIAEPARET). Residues 321-339 (LSASLADARARGSYMGFSR) are Cytoplasmic-facing. A helical transmembrane segment spans residues 340–360 (LGLAIGGAIGYIGGGWLFDLG). Residues 361–367 (KSAHQPE) are Periplasmic-facing. The helical transmembrane segment at 368-388 (LPWMMLGIIGIFTFLALGWQF) threads the bilayer. At 389–402 (SQKRAARRLLERDA) the chain is on the cytoplasmic side.

This sequence belongs to the major facilitator superfamily. DHA1 family. MdtH (TC 2.A.1.2.21) subfamily.

The protein localises to the cell inner membrane. Confers resistance to norfloxacin and enoxacin. The polypeptide is Multidrug resistance protein MdtH (Escherichia coli O9:H4 (strain HS)).